Reading from the N-terminus, the 155-residue chain is Small ribosomal subunit protein uS17 (155 aa).

Ala2 is subject to N-acetylalanine.

The protein belongs to the universal ribosomal protein uS17 family.

The chain is Small ribosomal subunit protein uS17 from Drosophila pseudoobscura pseudoobscura (Fruit fly).